The following is a 504-amino-acid chain: Arabinose import ATP-binding protein AraG (504 aa).

ABC transporter domains are found at residues 8 to 243 (LSFR…MVGR) and 256 to 499 (YGEE…MPKV). 40–47 (GENGAGKS) contacts ATP.

Belongs to the ABC transporter superfamily. Arabinose importer (TC 3.A.1.2.2) family. In terms of assembly, the complex is composed of two ATP-binding proteins (AraG), two transmembrane proteins (AraH) and a solute-binding protein (AraF).

The protein resides in the cell inner membrane. It carries out the reaction L-arabinose(out) + ATP + H2O = L-arabinose(in) + ADP + phosphate + H(+). Its function is as follows. Part of the ABC transporter complex AraFGH involved in arabinose import. Responsible for energy coupling to the transport system. The polypeptide is Arabinose import ATP-binding protein AraG (Escherichia coli (strain UTI89 / UPEC)).